A 198-amino-acid chain; its full sequence is MQYSRSVGRLIEELARLPGIGPKTAQRLAFHLVTAPREAAESLSRAILEARDKLVFCRVCANIADENPCGICRDQNRDHGLICVVERPRDVLAVEKAHGYRGLYHVLNGSLSPLQGVGPEELNIAALVTRVREGTVREVIVATNATVEGEATALYLARLLRPLNVRVTRLAFGLPVGSDLEYADGRTLARAIEGRREV.

The segment at 57 to 72 (CRVCANIADENPCGIC) adopts a C4-type zinc-finger fold. In terms of domain architecture, Toprim spans 80-175 (GLICVVERPR…RVTRLAFGLP (96 aa)).

Belongs to the RecR family.

Functionally, may play a role in DNA repair. It seems to be involved in an RecBC-independent recombinational process of DNA repair. It may act with RecF and RecO. This Desulforudis audaxviator (strain MP104C) protein is Recombination protein RecR.